The primary structure comprises 281 residues: Orotidine 5'-phosphate decarboxylase (281 aa).

Residue lysine 94 is the Proton donor of the active site.

Belongs to the OMP decarboxylase family. Type 2 subfamily.

It catalyses the reaction orotidine 5'-phosphate + H(+) = UMP + CO2. The protein operates within pyrimidine metabolism; UMP biosynthesis via de novo pathway; UMP from orotate: step 2/2. This Thermomicrobium roseum (strain ATCC 27502 / DSM 5159 / P-2) protein is Orotidine 5'-phosphate decarboxylase.